The primary structure comprises 277 residues: Large ribosomal subunit protein uL2 (277 aa).

The disordered stretch occupies residues 219–277; that stretch reads TVRGSVMNPNDHPHGGGEGKAPVGRKAPSTPWGKPALGLKTRNKKAKSDKLIVRRRNEK. Residues 264–277 show a composition bias toward basic and acidic residues; it reads AKSDKLIVRRRNEK.

Belongs to the universal ribosomal protein uL2 family. As to quaternary structure, part of the 50S ribosomal subunit. Forms a bridge to the 30S subunit in the 70S ribosome.

In terms of biological role, one of the primary rRNA binding proteins. Required for association of the 30S and 50S subunits to form the 70S ribosome, for tRNA binding and peptide bond formation. It has been suggested to have peptidyltransferase activity; this is somewhat controversial. Makes several contacts with the 16S rRNA in the 70S ribosome. In Streptococcus sanguinis (strain SK36), this protein is Large ribosomal subunit protein uL2.